The following is a 404-amino-acid chain: Cysteine desulfurase IscS (404 aa).

Residues 75–76 (AT), Asn-155, Gln-183, and 203–205 (SGH) contribute to the pyridoxal 5'-phosphate site. Lys-206 bears the N6-(pyridoxal phosphate)lysine mark. Thr-243 contacts pyridoxal 5'-phosphate. Cys-328 (cysteine persulfide intermediate) is an active-site residue. A [2Fe-2S] cluster-binding site is contributed by Cys-328.

Belongs to the class-V pyridoxal-phosphate-dependent aminotransferase family. NifS/IscS subfamily. As to quaternary structure, homodimer. Forms a heterotetramer with IscU, interacts with other sulfur acceptors. Requires pyridoxal 5'-phosphate as cofactor.

It localises to the cytoplasm. It carries out the reaction (sulfur carrier)-H + L-cysteine = (sulfur carrier)-SH + L-alanine. It participates in cofactor biosynthesis; iron-sulfur cluster biosynthesis. Functionally, master enzyme that delivers sulfur to a number of partners involved in Fe-S cluster assembly, tRNA modification or cofactor biosynthesis. Catalyzes the removal of elemental sulfur atoms from cysteine to produce alanine. Functions as a sulfur delivery protein for Fe-S cluster synthesis onto IscU, an Fe-S scaffold assembly protein, as well as other S acceptor proteins. The sequence is that of Cysteine desulfurase IscS from Pectobacterium carotovorum subsp. carotovorum (strain PC1).